Consider the following 474-residue polypeptide: Probable multidrug resistance protein NorM (474 aa).

12 helical membrane-spanning segments follow: residues 33–50, 65–87, 108–130, 150–172, 179–201, 211–233, 258–280, 295–317, 334–356, 376–398, 410–432, and 436–458; these read LWLA…IAMM, VAAA…GLVS, SLRV…QLYG, YLDG…GLMG, PALW…LIHG, FGAG…VVCV, LLQL…GAAA, QIAL…AATV, AGFA…VALT, TLTA…QVVA, VPLL…VLGF, and LGPF…LLVW.

It belongs to the multi antimicrobial extrusion (MATE) (TC 2.A.66.1) family.

It is found in the cell inner membrane. Functionally, multidrug efflux pump. This chain is Probable multidrug resistance protein NorM (norM), found in Rhodopseudomonas palustris (strain ATCC BAA-98 / CGA009).